Here is an 86-residue protein sequence, read N- to C-terminus: Large ribosomal subunit protein bL27c (86 aa).

A disordered region spans residues 1 to 20 (MAHKKGSGSTRNGRDSNAQR). The segment covering 7–19 (SGSTRNGRDSNAQ) has biased composition (polar residues).

This sequence belongs to the bacterial ribosomal protein bL27 family.

The protein localises to the plastid. Its subcellular location is the chloroplast. The chain is Large ribosomal subunit protein bL27c (rpl27) from Guillardia theta (Cryptophyte).